The following is a 253-amino-acid chain: 5'/3'-nucleotidase SurE (253 aa).

A divalent metal cation contacts are provided by Asp8, Asp9, Ser39, and Asn92.

It belongs to the SurE nucleotidase family. The cofactor is a divalent metal cation.

Its subcellular location is the cytoplasm. It carries out the reaction a ribonucleoside 5'-phosphate + H2O = a ribonucleoside + phosphate. It catalyses the reaction a ribonucleoside 3'-phosphate + H2O = a ribonucleoside + phosphate. The catalysed reaction is [phosphate](n) + H2O = [phosphate](n-1) + phosphate + H(+). Its function is as follows. Nucleotidase with a broad substrate specificity as it can dephosphorylate various ribo- and deoxyribonucleoside 5'-monophosphates and ribonucleoside 3'-monophosphates with highest affinity to 3'-AMP. Also hydrolyzes polyphosphate (exopolyphosphatase activity) with the preference for short-chain-length substrates (P20-25). Might be involved in the regulation of dNTP and NTP pools, and in the turnover of 3'-mononucleotides produced by numerous intracellular RNases (T1, T2, and F) during the degradation of various RNAs. This chain is 5'/3'-nucleotidase SurE, found in Salmonella paratyphi A (strain AKU_12601).